We begin with the raw amino-acid sequence, 140 residues long: Nucleoside diphosphate kinase (140 aa).

The ATP site is built by lysine 9, phenylalanine 57, arginine 85, threonine 91, arginine 102, and asparagine 112. Histidine 115 (pros-phosphohistidine intermediate) is an active-site residue.

The protein belongs to the NDK family. Homotetramer. Mg(2+) is required as a cofactor.

It localises to the cytoplasm. The catalysed reaction is a 2'-deoxyribonucleoside 5'-diphosphate + ATP = a 2'-deoxyribonucleoside 5'-triphosphate + ADP. It catalyses the reaction a ribonucleoside 5'-diphosphate + ATP = a ribonucleoside 5'-triphosphate + ADP. Major role in the synthesis of nucleoside triphosphates other than ATP. The ATP gamma phosphate is transferred to the NDP beta phosphate via a ping-pong mechanism, using a phosphorylated active-site intermediate. The sequence is that of Nucleoside diphosphate kinase from Chlorobaculum tepidum (strain ATCC 49652 / DSM 12025 / NBRC 103806 / TLS) (Chlorobium tepidum).